Here is a 1529-residue protein sequence, read N- to C-terminus: Myosin-11 (1529 aa).

The Myosin N-terminal SH3-like domain occupies 11–60; the sequence is IVGSHVWIEDSDVAWIDGLVEKINGQDVEVQATNGKKITAKLSKIYPKDM. Positions 65 to 735 constitute a Myosin motor domain; that stretch reads GGVDDMTKLS…QMAELDARRT (671 aa). ATP is bound by residues 159-166 and 212-220; these read GESGAGKT and NNNSSRFGK. 4 actin-binding regions span residues 498 to 532, 534 to 557, 592 to 616, and 616 to 638; these read LIEKKPGGIVALLDEACMFPKSTHETFANKLYQTF, THKRFIKPKLSRTDFAVAHYAGEV, FPPLPEETSKSSKFSSIGSRFKLQL, and LQQLMETLNSTEPHYIRCVKPNN. IQ domains lie at 738-767, 761-790, 786-815, 809-838, 834-863, and 857-886; these read LSAAAKKIQRRIRTHQAQRRFILLRKATIS, LRKATISLQALCRGRLSSKIFDNLRRQAAA, RQAAAVKIQKNARRLHSRKSYKNLHVAALV, LHVAALVVQTGLRAMAAHKQFRFRKQTKAA, QTKAATTIQAQFRCHRATLYFKKLKKGVIL, and LKKGVILSQTRWRGKLARRELRQLKMASRE. Residues 887–1059 are a coiled coil; that stretch reads TGALKEAKDM…VLRQQAVSIA (173 aa). Positions 993–1027 are enriched in basic and acidic residues; the sequence is EQEKQRADDATRKFDEAQESSEDRKKKLEDTEKKA. Disordered stretches follow at residues 993-1031 and 1096-1115; these read EQEKQRADDATRKFDEAQESSEDRKKKLEDTEKKAQQLQ and INRRDLSEVDDKPQKSLNEK. Residues 1163 to 1472 enclose the Dilute domain; it reads DRIIQTIGQA…IANMRVLMTE (310 aa).

Belongs to the TRAFAC class myosin-kinesin ATPase superfamily. Myosin family. Plant myosin class XI subfamily. As to quaternary structure, homodimer.

It localises to the cytoplasm. In terms of biological role, myosin heavy chain that is required for the cell cycle-regulated transport of various organelles and proteins for their segregation. Functions by binding with its tail domain to receptor proteins on organelles and exerting force with its N-terminal motor domain against actin filaments, thereby transporting its cargo along polarized actin cables. Involved in trafficking of Golgi stacks, mitochondria and peroxisomes. The protein is Myosin-11 (XI-E) of Arabidopsis thaliana (Mouse-ear cress).